A 566-amino-acid chain; its full sequence is Glucose starvation modulator protein 1 (566 aa).

A DNA-binding region (zn(2)-C6 fungal-type) is located at residues 20–48 (CVFCHQKHLQCSNERPCKNCVKRNIAHGC). 2 disordered regions span residues 63–92 (GVPG…SPMD) and 250–270 (KQAS…NTLS). A compositionally biased stretch (low complexity) spans 253 to 270 (SPSPSNTSTSENNTNTLS).

Belongs to the ERT1/acuK family.

It localises to the nucleus. Functionally, transcription factor which regulates nonfermentable carbon utilization. In Candida albicans (strain WO-1) (Yeast), this protein is Glucose starvation modulator protein 1 (GSM1).